Reading from the N-terminus, the 437-residue chain is GTPase Obg (437 aa).

The region spanning 2–160 is the Obg domain; that stretch reads SLFLDTARIE…KILLLELRVL (159 aa). The 178-residue stretch at 161–338 folds into the OBG-type G domain; the sequence is ADVGLVGFPS…LLARTSELLA (178 aa). GTP is bound by residues 167 to 174, 192 to 196, 214 to 217, 284 to 287, and 319 to 321; these read GFPSVGKS, FTTIT, DMPG, NKMD, and SGL. Serine 174 and threonine 194 together coordinate Mg(2+). The OCT domain occupies 359–437; it reads GFEEEEKPFK…IQKFEFEFVD (79 aa).

It belongs to the TRAFAC class OBG-HflX-like GTPase superfamily. OBG GTPase family. Monomer. The cofactor is Mg(2+).

Its subcellular location is the cytoplasm. Functionally, an essential GTPase which binds GTP, GDP and possibly (p)ppGpp with moderate affinity, with high nucleotide exchange rates and a fairly low GTP hydrolysis rate. Plays a role in control of the cell cycle, stress response, ribosome biogenesis and in those bacteria that undergo differentiation, in morphogenesis control. This is GTPase Obg from Lactococcus lactis subsp. lactis (strain IL1403) (Streptococcus lactis).